The following is a 287-amino-acid chain: Hydroxysteroid 11-beta-dehydrogenase 1-like protein (287 aa).

Residues 1 to 15 (MKVLLLTGLGALFFA) form the signal peptide. Residues 36 to 62 (GASAGVGEELAYHYARLGSHLVLTAHT), 87 to 88 (DM), and 114 to 116 (NHI) contribute to the NADP(+) site. Substrate is bound at residue Ser-165. Tyr-178 (proton acceptor) is an active-site residue. Residues 178–182 (YSAAK) and 211–217 (GLRDRAS) contribute to the NADP(+) site.

Belongs to the short-chain dehydrogenases/reductases (SDR) family.

The protein localises to the secreted. The enzyme catalyses cortisone + NADPH + H(+) = cortisol + NADP(+). Functionally, unidirectional NADP(+)-dependent cortisol dehydrogenase (in vitro). This chain is Hydroxysteroid 11-beta-dehydrogenase 1-like protein (HSD11B1L), found in Macaca fascicularis (Crab-eating macaque).